The primary structure comprises 141 residues: MSNKKIIKIIKLQIPGGKANPAPPIGPALGAAGVNIMGFCKEFNAATQDRPGDLLPVVITVYSDKTFSFVMKQSPVSSLIKKALGLESGSKIPNRNKVGKLTRAQITVIAEQKMKDMDVVLLESAERMVEGTARSMGVDVE.

It belongs to the universal ribosomal protein uL11 family. In terms of assembly, part of the ribosomal stalk of the 50S ribosomal subunit. Interacts with L10 and the large rRNA to form the base of the stalk. L10 forms an elongated spine to which L12 dimers bind in a sequential fashion forming a multimeric L10(L12)X complex. In terms of processing, one or more lysine residues are methylated.

Its function is as follows. Forms part of the ribosomal stalk which helps the ribosome interact with GTP-bound translation factors. This chain is Large ribosomal subunit protein uL11, found in Chlamydia trachomatis serovar A (strain ATCC VR-571B / DSM 19440 / HAR-13).